The following is an 82-amino-acid chain: NAD(P)H-quinone oxidoreductase subunit O, organellar chromatophore (82 aa).

The protein belongs to the complex I NdhO subunit family. In terms of assembly, NDH-1 can be composed of about 15 different subunits; different subcomplexes with different compositions have been identified which probably have different functions.

The protein localises to the plastid. Its subcellular location is the organellar chromatophore thylakoid membrane. It catalyses the reaction a plastoquinone + NADH + (n+1) H(+)(in) = a plastoquinol + NAD(+) + n H(+)(out). It carries out the reaction a plastoquinone + NADPH + (n+1) H(+)(in) = a plastoquinol + NADP(+) + n H(+)(out). Functionally, NDH-1 shuttles electrons from an unknown electron donor, via FMN and iron-sulfur (Fe-S) centers, to quinones in the respiratory and/or the photosynthetic chain. The immediate electron acceptor for the enzyme in this species is believed to be plastoquinone. Couples the redox reaction to proton translocation, and thus conserves the redox energy in a proton gradient. Cyanobacterial NDH-1 also plays a role in inorganic carbon-concentration. In Paulinella chromatophora, this protein is NAD(P)H-quinone oxidoreductase subunit O, organellar chromatophore.